Consider the following 271-residue polypeptide: Aquaporin-1 (271 aa).

Over 1-11 the chain is Cytoplasmic; sequence MASEFKKKIFW. The helical transmembrane segment at 12-29 threads the bilayer; that stretch reads RAVVAEFLAMTLFIFISI. Residues 30–48 are Extracellular-facing; it reads GSALGFQYPVRNNQTSGAA. Asparagine 42 is a glycosylation site (N-linked (GlcNAc...) asparagine). Residues 49–67 form a helical membrane-spanning segment; the sequence is QDNVKVSLAFGLSIATLAQ. Residues 68-70 are Cytoplasmic-facing; the sequence is SVG. Residues 71-84 lie within the membrane without spanning it; the sequence is HISGAHLNPAVTLG. The short motif at 78–80 is the NPA 1 element; sequence NPA. The Cytoplasmic portion of the chain corresponds to 85-92; sequence LLLSCQIS. The helical transmembrane segment at 93 to 111 threads the bilayer; sequence VLRAVMYIIAQCVGAIVAT. Over 112–135 the chain is Extracellular; that stretch reads AILSGITSSLPGNSLGLNSLAPGV. A helical membrane pass occupies residues 136-155; that stretch reads DSGQGLGIEIIGTLQLVLCV. Over 156–165 the chain is Cytoplasmic; sequence LATTDRRRRD. The chain crosses the membrane as a helical span at residues 166–183; it reads LGGSAPLAIGFSVALGHL. Residues 184-188 are Extracellular-facing; sequence LAIDY. The stretch at 189–201 is an intramembrane region; sequence TGCGINPARSFGS. Positions 194–196 match the NPA 2 motif; sequence NPA. The Extracellular segment spans residues 202-208; sequence AVITHNF. A helical transmembrane segment spans residues 209-226; that stretch reads QDHWVFWVGPFIGGALAV. The Cytoplasmic portion of the chain corresponds to 227–271; sequence LIYDFILAPRSSDLTDRVKVWTSGQVEEYDLDGDDINSRVEMKPK. Serine 249 bears the Phosphoserine mark. Position 255 is a phosphotyrosine (tyrosine 255). Serine 264 carries the phosphoserine modification.

It belongs to the MIP/aquaporin (TC 1.A.8) family. In terms of assembly, homotetramer; each monomer provides an independent water pore. Component of the ankyrin-1 complex in the erythrocyte, composed of ANK1, RHCE, RHAG, SLC4A1, EPB42, GYPA, GYPB and AQP1. Interacts with EPHB2; involved in endolymph production in the inner ear. Identified in a complex with STOM. Interacts (via the N-terminal) with ANK1 (via ANK 1-5 repeats). Interacts (via the C-terminal) with EPB42.

The protein localises to the cell membrane. The enzyme catalyses H2O(in) = H2O(out). It catalyses the reaction nitric oxide(out) = nitric oxide(in). It carries out the reaction CO2(out) = CO2(in). The catalysed reaction is glycerol(in) = glycerol(out). The enzyme catalyses H2O2(out) = H2O2(in). It catalyses the reaction K(+)(in) = K(+)(out). It carries out the reaction Na(+)(in) = Na(+)(out). Functionally, forms a water channel that facilitates the transport of water across cell membranes, playing a crucial role in water homeostasis in various tissues. Could also be permeable to small solutes including hydrogen peroxide, glycerol and gases such as amonnia (NH3), nitric oxide (NO) and carbon dioxide (CO2). Recruited to the ankyrin-1 complex, a multiprotein complex of the erythrocyte membrane, it could be part of a CO2 metabolon, linking facilitated diffusion of CO2 across the membrane, anion exchange of Cl(-)/HCO3(-) and interconversion of dissolved CO2 and carbonic acid in the cytosol. In vitro, it shows non-selective gated cation channel activity and may be permeable to cations like K(+) and Na(+) in vivo. The chain is Aquaporin-1 from Sus scrofa (Pig).